The chain runs to 320 residues: Iminosuccinate reductase (320 aa).

Residue Lys-67 is the Proton donor/acceptor of the active site. Residues Arg-110, 137–138 (HQ), Asn-159, Ser-199, 219–222 (MGTD), Lys-226, and Gly-291 each bind NAD(+).

It belongs to the ornithine cyclodeaminase/mu-crystallin family. BhcD subfamily.

The catalysed reaction is L-aspartate + NAD(+) = iminosuccinate + NADH + H(+). Imine reductase that catalyzes the NADH-dependent reduction of iminosuccinate to L-aspartate. Is essential for the growth of P.denitrificans in the presence of glycolate and glyoxylate since it functions in glyoxylate assimilation via the beta-hydroxyaspartate cycle (BHAC). Thereby BhcD regenerates the amino group donor for the first step of the BHAC. The protein is Iminosuccinate reductase of Paracoccus denitrificans (strain Pd 1222).